The chain runs to 189 residues: Large ribosomal subunit protein uL5 (189 aa).

It belongs to the universal ribosomal protein uL5 family. Part of the 50S ribosomal subunit; part of the 5S rRNA/L5/L18/L25 subcomplex. Contacts the 5S rRNA and the P site tRNA. Forms a bridge to the 30S subunit in the 70S ribosome.

Its function is as follows. This is one of the proteins that bind and probably mediate the attachment of the 5S RNA into the large ribosomal subunit, where it forms part of the central protuberance. In the 70S ribosome it contacts protein S13 of the 30S subunit (bridge B1b), connecting the 2 subunits; this bridge is implicated in subunit movement. Contacts the P site tRNA; the 5S rRNA and some of its associated proteins might help stabilize positioning of ribosome-bound tRNAs. The protein is Large ribosomal subunit protein uL5 of Kineococcus radiotolerans (strain ATCC BAA-149 / DSM 14245 / SRS30216).